We begin with the raw amino-acid sequence, 33 residues long: Pardaxin P-1 (33 aa).

It belongs to the pardaxin family. In terms of assembly, in aqueous solution exists as a tetramer.

The protein localises to the secreted. It is found in the target cell membrane. In terms of biological role, exhibits unusual shark repellent and surfactant properties. Forms voltage-dependent, ion-permeable channels in membranes. At high concentration causes cell membrane lysis. Causes death in killfish oryzias latipes in 30 minutes at a concentration of 25 micrograms/ml. The chain is Pardaxin P-1 from Pardachirus pavoninus (Peacock sole).